The primary structure comprises 437 residues: Pterin deaminase (437 aa).

H80 and H82 together coordinate a divalent metal cation. A substrate-binding site is contributed by K85. H231 contributes to the a divalent metal cation binding site. The Proton donor role is filled by E234. Position 331 (D331) interacts with a divalent metal cation. Substrate is bound at residue 331–332; that stretch reads DN.

Belongs to the metallo-dependent hydrolases superfamily. Pterin deaminase family. A divalent metal cation is required as a cofactor.

It catalyses the reaction a 2-amino-4-hydroxypteridine + H2O + H(+) = a 2,4-dihydroxypteridine + NH4(+). The catalysed reaction is L-sepiapterin + H2O + H(+) = (S)-xanthopterin-B2 + NH4(+). Catalyzes the deamination of many pterin metabolites, such as formylpterin, pterin-6-carboxylate, pterin-7-carboxylate, pterin, hydroxymethylpterin, biopterin, D-(+)-neopterin, isoxanthopterin, sepiapterin, folate, xanthopterin, and 7,8-dihydrohydroxymethylpterin. May be involved in a degradative pathway for catabolizing pterin rings. The polypeptide is Pterin deaminase (Rhizobium rhizogenes (strain K84 / ATCC BAA-868) (Agrobacterium radiobacter)).